The primary structure comprises 323 residues: Transcription factor MafB (323 aa).

Residue K32 forms a Glycyl lysine isopeptide (Lys-Gly) (interchain with G-Cter in SUMO) linkage. A compositionally biased stretch (basic and acidic residues) spans 34 to 43; the sequence is EPLGRAERPG. Disordered regions lie at residues 34–78 and 116–210; these read EPLG…PTEQ and PVPQ…VEDR. Residues 54–76 are compositionally biased toward low complexity; that stretch reads SLSSTPLSTPCSSVPSSPSFSPT. Basic residues-rich tracts occupy residues 129-143 and 159-168; these read GAHH…HPHH and AHPHHHHHHQ. A compositionally biased stretch (low complexity) spans 192-201; it reads PHATASATAA. The basic motif stretch occupies residues 238 to 263; the sequence is RLKQKRRTLKNRGYAQSCRYKRVQQK. The region spanning 238–301 is the bZIP domain; the sequence is RLKQKRRTLK…DAHKVKCEKL (64 aa). Positions 266-287 are leucine-zipper; that stretch reads LENEKTQLIQQVEQLKQEVSRL. Residue K297 forms a Glycyl lysine isopeptide (Lys-Gly) (interchain with G-Cter in SUMO) linkage.

The protein belongs to the bZIP family. Maf subfamily. As to quaternary structure, homodimer or heterodimer with other bHLH-Zip transcription factors. Binds DNA as a homodimer or a heterodimer. Forms homodimers and heterodimers with FOS, FOSB and FOSL2, but not with JUN proteins (JUN, JUNB and JUND). Interacts with PAX6; the interaction is direct. Interacts with ETS1 and LRP1. Interacts with the intracellular cytoplasmic domain of LRP1 (LRPICD); the interaction results in a moderate reduction of MAFB transcriptional potential. Sumoylated. Sumoylation on Lys-32 and Lys-297 stimulates its transcriptional repression activity and promotes macrophage differentiation from myeloid progenitors.

It is found in the nucleus. In terms of biological role, acts as a transcriptional activator or repressor. Plays a pivotal role in regulating lineage-specific hematopoiesis by repressing ETS1-mediated transcription of erythroid-specific genes in myeloid cells. Required for monocytic, macrophage, osteoclast, podocyte and islet beta cell differentiation. Involved in renal tubule survival and F4/80 maturation. Activates the insulin and glucagon promoters. Together with PAX6, transactivates weakly the glucagon gene promoter through the G1 element. SUMO modification controls its transcriptional activity and ability to specify macrophage fate. Binds element G1 on the glucagon promoter. Involved either as an oncogene or as a tumor suppressor, depending on the cell context. Required for the transcriptional activation of HOXB3 in the rhombomere r5 in the hindbrain. In Macaca fascicularis (Crab-eating macaque), this protein is Transcription factor MafB (MAFB).